A 301-amino-acid chain; its full sequence is ADP,ATP carrier protein 1 (301 aa).

Solcar repeat units follow at residues 8–100, 113–203, and 210–299; these read YGFA…YKQV, RYFL…AKGM, and TSIF…VKAL. 5 helical membrane passes run 10-39, 77-101, 112-132, 181-201, and 213-233; these read FAKD…LLLQ, LANV…KQVF, WRYF…SLCF, VSVQ…DTAK, and FVSW…SYPF. Residues R82 and K94 each contribute to the ADP site. An ADP-binding site is contributed by R237. The important for transport activity stretch occupies residues 237-242; that stretch reads RRRMMM. A Nucleotide carrier signature motif motif is present at residues 237 to 242; the sequence is RRRMMM. A helical membrane pass occupies residues 276 to 293; it reads AFSNVLRGTGGALVLVFY.

This sequence belongs to the mitochondrial carrier (TC 2.A.29) family. Monomer.

The protein localises to the mitochondrion inner membrane. It carries out the reaction ADP(in) + ATP(out) = ADP(out) + ATP(in). With respect to regulation, the matrix-open state (m-state) is inhibited by the membrane-permeable bongkrekic acid (BKA). The cytoplasmic-open state (c-state) is inhibited by the membrane-impermeable toxic inhibitor carboxyatractyloside (CATR). In terms of biological role, ADP:ATP antiporter that mediates import of ADP into the mitochondrial matrix for ATP synthesis, and export of ATP out to fuel the cell. Cycles between the cytoplasmic-open state (c-state) and the matrix-open state (m-state): operates by the alternating access mechanism with a single substrate-binding site intermittently exposed to either the cytosolic (c-state) or matrix (m-state) side of the inner mitochondrial membrane. This is ADP,ATP carrier protein 1 from Anopheles gambiae (African malaria mosquito).